We begin with the raw amino-acid sequence, 135 residues long: Ribonuclease P protein component (135 aa).

The protein belongs to the RnpA family. Consists of a catalytic RNA component (M1 or rnpB) and a protein subunit.

It carries out the reaction Endonucleolytic cleavage of RNA, removing 5'-extranucleotides from tRNA precursor.. In terms of biological role, RNaseP catalyzes the removal of the 5'-leader sequence from pre-tRNA to produce the mature 5'-terminus. It can also cleave other RNA substrates such as 4.5S RNA. The protein component plays an auxiliary but essential role in vivo by binding to the 5'-leader sequence and broadening the substrate specificity of the ribozyme. The protein is Ribonuclease P protein component of Saccharophagus degradans (strain 2-40 / ATCC 43961 / DSM 17024).